We begin with the raw amino-acid sequence, 523 residues long: 2-isopropylmalate synthase (523 aa).

The region spanning valine 5–histidine 267 is the Pyruvate carboxyltransferase domain. Residues aspartate 14, histidine 202, histidine 204, and asparagine 238 each contribute to the Mn(2+) site. The regulatory domain stretch occupies residues lysine 392–valine 523.

This sequence belongs to the alpha-IPM synthase/homocitrate synthase family. LeuA type 1 subfamily. As to quaternary structure, homodimer. Requires Mn(2+) as cofactor.

The protein localises to the cytoplasm. The enzyme catalyses 3-methyl-2-oxobutanoate + acetyl-CoA + H2O = (2S)-2-isopropylmalate + CoA + H(+). It functions in the pathway amino-acid biosynthesis; L-leucine biosynthesis; L-leucine from 3-methyl-2-oxobutanoate: step 1/4. Its function is as follows. Catalyzes the condensation of the acetyl group of acetyl-CoA with 3-methyl-2-oxobutanoate (2-ketoisovalerate) to form 3-carboxy-3-hydroxy-4-methylpentanoate (2-isopropylmalate). In Shewanella piezotolerans (strain WP3 / JCM 13877), this protein is 2-isopropylmalate synthase.